A 392-amino-acid chain; its full sequence is Histidinol-phosphate aminotransferase (392 aa).

The disordered stretch occupies residues 1 to 24 (MSAVLKDPIPAPGRPESTRPEPRP). Position 236 is an N6-(pyridoxal phosphate)lysine (lysine 236).

The protein belongs to the class-II pyridoxal-phosphate-dependent aminotransferase family. Histidinol-phosphate aminotransferase subfamily. As to quaternary structure, homodimer. Pyridoxal 5'-phosphate serves as cofactor.

It carries out the reaction L-histidinol phosphate + 2-oxoglutarate = 3-(imidazol-4-yl)-2-oxopropyl phosphate + L-glutamate. The protein operates within amino-acid biosynthesis; L-histidine biosynthesis; L-histidine from 5-phospho-alpha-D-ribose 1-diphosphate: step 7/9. This Xanthobacter autotrophicus (strain ATCC BAA-1158 / Py2) protein is Histidinol-phosphate aminotransferase.